The primary structure comprises 323 residues: Transaldolase (323 aa).

The Schiff-base intermediate with substrate role is filled by Lys-133.

Belongs to the transaldolase family. Type 1 subfamily. As to quaternary structure, monomer.

The enzyme catalyses D-sedoheptulose 7-phosphate + D-glyceraldehyde 3-phosphate = D-erythrose 4-phosphate + beta-D-fructose 6-phosphate. The protein operates within carbohydrate degradation; pentose phosphate pathway; D-glyceraldehyde 3-phosphate and beta-D-fructose 6-phosphate from D-ribose 5-phosphate and D-xylulose 5-phosphate (non-oxidative stage): step 2/3. In terms of biological role, transaldolase important for the balance of metabolites in the pentose-phosphate pathway. Involved in xylose fermentation to ethanol. The polypeptide is Transaldolase (Fusarium oxysporum f. sp. lycopersici (strain 4287 / CBS 123668 / FGSC 9935 / NRRL 34936) (Fusarium vascular wilt of tomato)).